We begin with the raw amino-acid sequence, 711 residues long: Ribosomal RNA large subunit methyltransferase K/L (711 aa).

In terms of domain architecture, THUMP spans 43-154; the sequence is LAYRITLWSR…RGQITLGINF (112 aa).

Belongs to the methyltransferase superfamily. RlmKL family.

Its subcellular location is the cytoplasm. It carries out the reaction guanosine(2445) in 23S rRNA + S-adenosyl-L-methionine = N(2)-methylguanosine(2445) in 23S rRNA + S-adenosyl-L-homocysteine + H(+). The enzyme catalyses guanosine(2069) in 23S rRNA + S-adenosyl-L-methionine = N(2)-methylguanosine(2069) in 23S rRNA + S-adenosyl-L-homocysteine + H(+). In terms of biological role, specifically methylates the guanine in position 2445 (m2G2445) and the guanine in position 2069 (m7G2069) of 23S rRNA. This chain is Ribosomal RNA large subunit methyltransferase K/L, found in Shewanella loihica (strain ATCC BAA-1088 / PV-4).